Reading from the N-terminus, the 219-residue chain is MQHTDDMVQERRGMVELLRRYGIRNSRVLDAFLTVKRHLFVDGESRMFAYHDSALPIGFGQTISQPYTVAYMMELLVENCSSGKVLEIGTGSGFQAAILDALGYRVFTIECVAGLYELASARFEKLGIPVQSRLGDGTLGWPEEAPFDAIIVTAAAPHEPRELMSQLADGGVLILPLGSLASQQMTVIRRKGNRFEHEGFDHFAFVPLLGREGWPDSDE.

The active site involves S64.

This sequence belongs to the methyltransferase superfamily. L-isoaspartyl/D-aspartyl protein methyltransferase family.

The protein localises to the cytoplasm. It carries out the reaction [protein]-L-isoaspartate + S-adenosyl-L-methionine = [protein]-L-isoaspartate alpha-methyl ester + S-adenosyl-L-homocysteine. In terms of biological role, catalyzes the methyl esterification of L-isoaspartyl residues in peptides and proteins that result from spontaneous decomposition of normal L-aspartyl and L-asparaginyl residues. It plays a role in the repair and/or degradation of damaged proteins. The chain is Protein-L-isoaspartate O-methyltransferase from Chlorobaculum parvum (strain DSM 263 / NCIMB 8327) (Chlorobium vibrioforme subsp. thiosulfatophilum).